A 303-amino-acid chain; its full sequence is Uridylate-specific endoribonuclease C (303 aa).

The signal sequence occupies residues 1-16; it reads MVYLVFLCLLPSLISG. The EndoU domain occupies 32-303; that stretch reads TDAEIQSLAE…KRFVASSYPI (272 aa). Residues His-181, His-196, and Lys-239 contribute to the active site. Residue Asn-287 is glycosylated (N-linked (GlcNAc...) asparagine).

Belongs to the ENDOU family. Monomer. It depends on Mn(2+) as a cofactor.

It localises to the secreted. It carries out the reaction ribonucleotidyl-uridine-RNA = a 5'-end dephospho-uridine-RNA + a 3'-end 2',3'-cyclophospho-ribonucleotide-RNA. In terms of biological role, endoribonuclease that cleaves single-stranded RNAs at 5' of uridylates and releases a product with a 2',3'-cyclic phosphate at the 3'-end. In Xenopus laevis (African clawed frog), this protein is Uridylate-specific endoribonuclease C (endou-c).